The chain runs to 430 residues: Sphingosine-1-phosphate phosphatase 1 (430 aa).

The tract at residues serine 34–threonine 103 is disordered. The residue at position 101 (serine 101) is a Phosphoserine. Threonine 103 carries the phosphothreonine modification. 4 helical membrane passes run phenylalanine 121 to isoleucine 141, leucine 152 to tryptophan 172, methionine 193 to tyrosine 213, and tryptophan 216 to leucine 236. Residues lysine 167–proline 175 form a phosphatase sequence motif I region. The segment at proline 194–histidine 197 is phosphatase sequence motif II. Histidine 197 (proton donor) is an active-site residue. Residues serine 237–aspartate 248 form a phosphatase sequence motif III region. Histidine 244 (nucleophile) is an active-site residue. A run of 5 helical transmembrane segments spans residues isoleucine 246–leucine 266, tyrosine 279–aspartate 299, isoleucine 311–serine 331, valine 348–valine 368, and tyrosine 409–isoleucine 429.

It belongs to the type 2 lipid phosphate phosphatase family. As to expression, highly expressed in liver and kidney. Expressed in epidermis, in the stratum granulosum and the stratum spinosum.

The protein localises to the endoplasmic reticulum membrane. The protein resides in the cell membrane. The enzyme catalyses sphinganine 1-phosphate + H2O = sphinganine + phosphate. It carries out the reaction sphing-4-enine 1-phosphate + H2O = sphing-4-enine + phosphate. Inhibited by NaF, sodium orthovanadate, propanolol, and N-ethylmaleimide. Functionally, specifically dephosphorylates sphingosine 1-phosphate (S1P), dihydro-S1P, and phyto-S1P. Does not act on ceramide 1-phosphate, lysophosphatidic acid or phosphatidic acid. Sphingosine-1-phosphate phosphatase activity is needed for efficient recycling of sphingosine into the sphingolipid synthesis pathway. Regulates the intracellular levels of the bioactive sphingolipid metabolite S1P that regulates diverse biological processes acting both as an extracellular receptor ligand or as an intracellular second messenger. Involved in efficient ceramide synthesis from exogenous sphingoid bases. Converts S1P to sphingosine, which is readily metabolized to ceramide via ceramide synthase. In concert with sphingosine kinase 2 (SphK2), recycles sphingosine into ceramide through a phosphorylation/dephosphorylation cycle. Regulates endoplasmic-to-Golgi trafficking of ceramides, resulting in the regulation of ceramide levels in the endoplasmic reticulum, preferentially long-chain ceramide species, and influences the anterograde membrane transport of both ceramide and proteins from the endoplasmic reticulum to the Golgi apparatus. The modulation of intracellular ceramide levels in turn regulates apoptosis. Via S1P levels, modulates resting tone, intracellular Ca(2+) and myogenic vasoconstriction in resistance arteries. Also involved in unfolded protein response (UPR) and ER stress-induced autophagy via regulation of intracellular S1P levels. Involved in the regulation of epidermal homeostasis and keratinocyte differentiation. The chain is Sphingosine-1-phosphate phosphatase 1 from Mus musculus (Mouse).